A 1180-amino-acid polypeptide reads, in one-letter code: Pesticidal crystal protein Cry4Aa (1180 aa).

This sequence belongs to the delta endotoxin family.

In terms of biological role, promotes colloidosmotic lysis by binding to the midgut epithelial cells of insects. This Bacillus thuringiensis subsp. israelensis protein is Pesticidal crystal protein Cry4Aa (cry4Aa).